Consider the following 427-residue polypeptide: MDQIVIRGGQRLKGRIPISGAKNAALTLLPCALLTDEPLTLRNLPRLADVDGFGHLLNQLGCSTTIEGSRPEDFGRVMTARATTLTSTVAPYDIVRKMRASILVLGPLLARAGEATVSLPGGCAIGNRPIDLHLKALEAFGAEIELASGYVKAVAAGGRLAGGRFTFPVVSVGATENAVMAAVLAKGTCVLENAAREPEIVDLCNCLVAMGAHIEGIGTETLTIEGVDRLHGATYRVMADRIEAGSYACAAVITEGDVELVGAKASEMEATLAALREAGATVEETKGGIRVAMAGRAQPVTLSTAPYPGFATDMQAQFMAMATLGTGASLFTETIFENRYMHVPELARMGCDIQVKGRTAVVRGVDRLIGAPVMATDLRASMSLIIAGLAAEGTTEVNRVYHLDRGYERLEEKLQAVGADIERISAG.

22–23 (KN) is a phosphoenolpyruvate binding site. A UDP-N-acetyl-alpha-D-glucosamine-binding site is contributed by arginine 99. Catalysis depends on cysteine 123, which acts as the Proton donor. The residue at position 123 (cysteine 123) is a 2-(S-cysteinyl)pyruvic acid O-phosphothioketal. UDP-N-acetyl-alpha-D-glucosamine-binding positions include 128–132 (RPIDL), aspartate 313, and isoleucine 335.

It belongs to the EPSP synthase family. MurA subfamily.

The protein localises to the cytoplasm. The enzyme catalyses phosphoenolpyruvate + UDP-N-acetyl-alpha-D-glucosamine = UDP-N-acetyl-3-O-(1-carboxyvinyl)-alpha-D-glucosamine + phosphate. Its pathway is cell wall biogenesis; peptidoglycan biosynthesis. Functionally, cell wall formation. Adds enolpyruvyl to UDP-N-acetylglucosamine. The polypeptide is UDP-N-acetylglucosamine 1-carboxyvinyltransferase (Sphingopyxis alaskensis (strain DSM 13593 / LMG 18877 / RB2256) (Sphingomonas alaskensis)).